Consider the following 96-residue polypeptide: Small ribosomal subunit protein bS6 (96 aa).

The protein belongs to the bacterial ribosomal protein bS6 family.

In terms of biological role, binds together with bS18 to 16S ribosomal RNA. In Gloeobacter violaceus (strain ATCC 29082 / PCC 7421), this protein is Small ribosomal subunit protein bS6.